The following is a 583-amino-acid chain: Undecaprenyl phosphate-alpha-4-amino-4-deoxy-L-arabinose arabinosyl transferase 2 (583 aa).

The tract at residues 1–20 (MTSRIQMHRTSPPPAYGTSA) is disordered. 12 helical membrane passes run 42–62 (LLLVAFGLFYLLPLTSHGLWI), 113–135 (LFGVRIASALSTGLSVLLAYLIT), 145–165 (SFAAALLYMSFGLIAGQAGYS), 166–186 (NLDPQFTLWVNLSLVALWFAL), 209–229 (FMTKGFLAWLLPVLIALPYMI), 241–261 (GLVAVLVAIGISLPWVLSIHA), 290–310 (WWFYLPLLVASSLPWAALLPG), 321–341 (QAPTGFLLLWFLLPLAFFSLS), 345–365 (LPTYIMPCLLPLAVLMGSALI), 380–400 (SLLNLLIGVAAMVALLYIQLT), 409–429 (MLGLSLVFIMLMGWIIANLLP), and 440–460 (PALGIWLLVALLPAGMPGFIV).

It belongs to the glycosyltransferase 83 family.

The protein localises to the cell inner membrane. It carries out the reaction 4-amino-4-deoxy-alpha-L-arabinopyranosyl di-trans,octa-cis-undecaprenyl phosphate + lipid IVA = lipid IIA + di-trans,octa-cis-undecaprenyl phosphate.. It functions in the pathway lipopolysaccharide metabolism; 4-amino-4-deoxy-beta-L-arabinose-lipid A biosynthesis. Its function is as follows. Catalyzes the transfer of the L-Ara4N moiety of the glycolipid undecaprenyl phosphate-alpha-L-Ara4N to lipid A. The modified arabinose is attached to lipid A and is required for resistance to polymyxin and cationic antimicrobial peptides. The chain is Undecaprenyl phosphate-alpha-4-amino-4-deoxy-L-arabinose arabinosyl transferase 2 from Pseudomonas fluorescens (strain ATCC BAA-477 / NRRL B-23932 / Pf-5).